Here is a 359-residue protein sequence, read N- to C-terminus: Carbamoyl phosphate synthase small chain (359 aa).

The segment at 1–169 is CPSase; that stretch reads MTKRILVLED…TKTSYPAPGV (169 aa). 3 residues coordinate L-glutamine: S46, G220, and G222. The Glutamine amidotransferase type-1 domain occupies 172–358; it reads SVVLVDFGLK…IEMMEVFKQS (187 aa). Residue C247 is the Nucleophile of the active site. Positions 248, 251, 289, 291, and 292 each coordinate L-glutamine. Catalysis depends on residues H331 and D333.

Belongs to the CarA family. Composed of two chains; the small (or glutamine) chain promotes the hydrolysis of glutamine to ammonia, which is used by the large (or ammonia) chain to synthesize carbamoyl phosphate. Tetramer of heterodimers (alpha,beta)4.

It catalyses the reaction hydrogencarbonate + L-glutamine + 2 ATP + H2O = carbamoyl phosphate + L-glutamate + 2 ADP + phosphate + 2 H(+). The enzyme catalyses L-glutamine + H2O = L-glutamate + NH4(+). It participates in amino-acid biosynthesis; L-arginine biosynthesis; carbamoyl phosphate from bicarbonate: step 1/1. Its pathway is pyrimidine metabolism; UMP biosynthesis via de novo pathway; (S)-dihydroorotate from bicarbonate: step 1/3. Functionally, small subunit of the glutamine-dependent carbamoyl phosphate synthetase (CPSase). CPSase catalyzes the formation of carbamoyl phosphate from the ammonia moiety of glutamine, carbonate, and phosphate donated by ATP, constituting the first step of 2 biosynthetic pathways, one leading to arginine and/or urea and the other to pyrimidine nucleotides. The small subunit (glutamine amidotransferase) binds and cleaves glutamine to supply the large subunit with the substrate ammonia. This Streptococcus pneumoniae (strain ATCC BAA-255 / R6) protein is Carbamoyl phosphate synthase small chain.